Here is a 1165-residue protein sequence, read N- to C-terminus: DNA-directed RNA polymerase subunit beta (1165 aa).

Belongs to the RNA polymerase beta chain family. The RNAP catalytic core consists of 2 alpha, 1 beta, 1 beta' and 1 omega subunit. When a sigma factor is associated with the core the holoenzyme is formed, which can initiate transcription.

The catalysed reaction is RNA(n) + a ribonucleoside 5'-triphosphate = RNA(n+1) + diphosphate. Its function is as follows. DNA-dependent RNA polymerase catalyzes the transcription of DNA into RNA using the four ribonucleoside triphosphates as substrates. The polypeptide is DNA-directed RNA polymerase subunit beta (Corynebacterium glutamicum (strain ATCC 13032 / DSM 20300 / JCM 1318 / BCRC 11384 / CCUG 27702 / LMG 3730 / NBRC 12168 / NCIMB 10025 / NRRL B-2784 / 534)).